Consider the following 155-residue polypeptide: Ribonuclease H (155 aa).

In terms of domain architecture, RNase H type-1 spans Gln-4–Thr-145. The Mg(2+) site is built by Asp-13, Glu-51, Asp-73, and Asp-137.

The protein belongs to the RNase H family. In terms of assembly, monomer. Mg(2+) serves as cofactor.

It is found in the cytoplasm. The enzyme catalyses Endonucleolytic cleavage to 5'-phosphomonoester.. Endonuclease that specifically degrades the RNA of RNA-DNA hybrids. The chain is Ribonuclease H from Bartonella quintana (strain Toulouse) (Rochalimaea quintana).